Reading from the N-terminus, the 322-residue chain is Breast cancer metastasis-suppressor 1-like protein (322 aa).

The segment covering 1-16 (MPVHSREKKESNHNDM) has biased composition (basic and acidic residues). A disordered region spans residues 1-56 (MPVHSREKKESNHNDMEVDYPENEGSSSEEDDSDSSSGSEEGDSSEMDDEDCERRR). Acidic residues predominate over residues 17–51 (EVDYPENEGSSSEEDDSDSSSGSEEGDSSEMDDED). Coiled-coil stretches lie at residues 50–99 (EDCE…QAQE) and 147–178 (EKLL…ITSE).

The protein belongs to the BRMS1 family.

The protein resides in the nucleus. Involved in the histone deacetylase (HDAC1)-dependent transcriptional repression activity. In Xenopus laevis (African clawed frog), this protein is Breast cancer metastasis-suppressor 1-like protein (brms1l).